The sequence spans 205 residues: ITG-like peptide (205 aa).

Residues 1–15 (MRVYAAITLVLVANT) form the signal peptide. 2 propeptides span residues 16-188 (AYIG…TSGE) and 202-205 (MPFA).

As to expression, expressed throughout the nervous system (at protein level).

It is found in the secreted. In Camponotus floridanus (Florida carpenter ant), this protein is ITG-like peptide.